The following is a 99-amino-acid chain: Putative pterin-4-alpha-carbinolamine dehydratase (99 aa).

This sequence belongs to the pterin-4-alpha-carbinolamine dehydratase family.

It carries out the reaction (4aS,6R)-4a-hydroxy-L-erythro-5,6,7,8-tetrahydrobiopterin = (6R)-L-erythro-6,7-dihydrobiopterin + H2O. This chain is Putative pterin-4-alpha-carbinolamine dehydratase, found in Aquifex aeolicus (strain VF5).